Reading from the N-terminus, the 181-residue chain is Inner membrane-spanning protein YciB (181 aa).

Helical transmembrane passes span 10–30, 50–70, 72–92, 118–138, and 148–168; these read LIIFFAVYKFFDIYIASGALI, MHLITFAMVTVFGTLTLVFHD, AFIKWKVTIIYALFALALGVS, VTWYWVSFFAICGLVNIYVAF, and FKVFGLTALTLINTVITVFYL.

The protein belongs to the YciB family.

It is found in the cell inner membrane. Its function is as follows. Plays a role in cell envelope biogenesis, maintenance of cell envelope integrity and membrane homeostasis. The sequence is that of Inner membrane-spanning protein YciB from Shewanella sp. (strain ANA-3).